The primary structure comprises 200 residues: Large ribosomal subunit protein uL4 (200 aa).

The tract at residues 42–65 (TRAQKTRSEVSGGGAKPWRQKGTG) is disordered.

This sequence belongs to the universal ribosomal protein uL4 family. As to quaternary structure, part of the 50S ribosomal subunit.

Its function is as follows. One of the primary rRNA binding proteins, this protein initially binds near the 5'-end of the 23S rRNA. It is important during the early stages of 50S assembly. It makes multiple contacts with different domains of the 23S rRNA in the assembled 50S subunit and ribosome. Functionally, forms part of the polypeptide exit tunnel. The protein is Large ribosomal subunit protein uL4 of Vibrio parahaemolyticus serotype O3:K6 (strain RIMD 2210633).